Here is a 225-residue protein sequence, read N- to C-terminus: FKNLNFNEQSLILQGDATVSSTGRLTNVVDNGEPRTSSLGRAFYSAPIWDKPTGRLASWREKIQEPNKAGPADGMAFALVPVGSEPKDKGAGLLGLFDEYDSNRHPVAVEFDTCYNLEHDPKERHSIRSIATPRWDFPNGENAEVLITYDEELQLLVASLVYPGERPYYLPSDRVEIEDELPEYVIPGFSATRGLNEGETHDVLSWSFASKMPDEQESEGLDLAE.

As to quaternary structure, homotetramer.

In terms of biological role, chitin-binding lectin. Agglutinates rabbit erythrocytes, but not human erythrocytes. This Vachellia farnesiana (Sweet acacia) protein is Lectin.